A 327-amino-acid chain; its full sequence is MNSETLAPTPPATLVIASRESRLAMWQAEHVRCALHKLYPSCDVKILGMTTRGDQILDRTLSKVGGKGLFVKELENALADGRADLAVHSLKDVPMELPEGFVLSTIMEREDPRDAFVSNQYDSLAALPAGSVVGTSSLRREAMLRARYPELVVKPLRGNLDTRLGKLDRGDYAAIILAAAGLKRLGLGERIRSLLDPADSLPAAGQGALGIEIRAGRDDLAAWLAPLHHEHTAAAVEAERMVSRTLGGSCEVPLAAYATWHDGALHLRGIVATPDGERVLSAQASAPAATTDAALELGREVASQLEAQGALDIVRALSTASGPAASA.

C250 bears the S-(dipyrrolylmethanemethyl)cysteine mark.

Belongs to the HMBS family. As to quaternary structure, monomer. The cofactor is dipyrromethane.

It catalyses the reaction 4 porphobilinogen + H2O = hydroxymethylbilane + 4 NH4(+). Its pathway is porphyrin-containing compound metabolism; protoporphyrin-IX biosynthesis; coproporphyrinogen-III from 5-aminolevulinate: step 2/4. In terms of biological role, tetrapolymerization of the monopyrrole PBG into the hydroxymethylbilane pre-uroporphyrinogen in several discrete steps. In Paraburkholderia phymatum (strain DSM 17167 / CIP 108236 / LMG 21445 / STM815) (Burkholderia phymatum), this protein is Porphobilinogen deaminase.